Here is a 628-residue protein sequence, read N- to C-terminus: (-)-beta-pinene synthase 1, chloroplastic (628 aa).

A chloroplast-targeting transit peptide spans 1-51 (MDLISVLPSASKSCVCLHKPLSSSTHKLKPFCRTIRILGMPRPRKSVLMVS). Positions 379, 383, and 531 each coordinate Mg(2+). Positions 379 to 383 (DDMYD) match the DDXXD motif motif.

Belongs to the terpene synthase family. Tpsd subfamily. It depends on Mg(2+) as a cofactor. Requires Mn(2+) as cofactor.

It localises to the plastid. Its subcellular location is the chloroplast. The catalysed reaction is (2E)-geranyl diphosphate = (1S,5S)-beta-pinene + diphosphate. It catalyses the reaction (2E)-geranyl diphosphate = (1S,5S)-alpha-pinene + diphosphate. Its pathway is terpene metabolism; oleoresin biosynthesis. It functions in the pathway secondary metabolite biosynthesis; terpenoid biosynthesis. Monoterpene synthase (TPS) involved in the biosynthesis of monoterpene natural products included in conifer oleoresin secretions and volatile emissions; these compounds contribute to biotic and abiotic stress defense against herbivores and pathogens. Catalyzes the conversion of (2E)-geranyl diphosphate (GPP) to (-)-beta-pinene and, to a lower extent, to (-)-alpha-pinene. The chain is (-)-beta-pinene synthase 1, chloroplastic from Pinus banksiana (Jack pine).